Reading from the N-terminus, the 641-residue chain is Homeobox protein ceh-38 (641 aa).

Composition is skewed to polar residues over residues methionine 1–threonine 14 and aspartate 28–glycine 38. Disordered regions lie at residues methionine 1–alanine 79 and leucine 129–methionine 244. Positions threonine 52–alanine 79 are enriched in low complexity. Basic and acidic residues predominate over residues valine 131–aspartate 140. Composition is skewed to polar residues over residues threonine 167–leucine 183 and asparagine 190–serine 204. Positions asparagine 308–threonine 394 form a DNA-binding region, CUT. Disordered regions lie at residues asparagine 398–lysine 428, glycine 485–threonine 508, and phenylalanine 552–asparagine 641. Residues serine 427–glycine 486 constitute a DNA-binding region (homeobox). Acidic residues predominate over residues histidine 571–alanine 604. A compositionally biased stretch (basic and acidic residues) spans lysine 613 to glutamate 626.

This sequence belongs to the CUT homeobox family. In terms of tissue distribution, expressed in the embryo. After gastrulation, expressed in almost all cells. During larval and adult stages, expressed in the dorsal and ventral nerve cord, head and tail neurons, pharynx, gut and head.

The protein localises to the nucleus. Probable DNA-binding regulatory protein involved in cell-fate specification. In Caenorhabditis elegans, this protein is Homeobox protein ceh-38 (ceh-38).